The following is a 295-amino-acid chain: Polyadenylate-binding protein 2-B (295 aa).

The interval 1-102 (MAAVSSVASL…EEPGELTGDQ (102 aa)) is disordered. Composition is skewed to gly residues over residues 19–31 (LRGGAGPSGGGQD) and 71–81 (GRGGSGGGAGG). A compositionally biased stretch (acidic residues) spans 83 to 96 (EELEDEELEEEEPG). Residues 106–140 (DPELEAIKARVREMEEEAEKLKELQNEVEKQMNMS) are a coiled coil. Residues 145–295 (NAGPVIMSVE…ARATSWYTPY (151 aa)) are necessary for homooligomerization. Residues 162–239 (RSIYVGNVDY…RQIKVVPKRT (78 aa)) enclose the RRM domain.

In terms of assembly, monomer and homooligomer. Binds RNA as a monomer and oligomerizes when bound to poly(A).

It is found in the nucleus. The protein localises to the cytoplasm. Its function is as follows. Involved in the 3'-end formation of mRNA precursors (pre-mRNA) by the addition of a poly(A) tail of 200-250 nt to the upstream cleavage product. Stimulates poly(A) polymerase (PAPOLA) conferring processivity on the poly(A) tail elongation reaction and also controls the poly(A) tail length. Increases the affinity of poly(A) polymerase for RNA. Binds to poly(A) and to poly(G) with high affinity. May protect the poly(A) tail from degradation. The protein is Polyadenylate-binding protein 2-B (pabpn1-b) of Xenopus laevis (African clawed frog).